The following is a 210-amino-acid chain: HTH-type transcriptional repressor FabR (210 aa).

Positions 10-70 (KTRRSLVEAA…TMVDESGLML (61 aa)) constitute an HTH tetR-type domain. A DNA-binding region (H-T-H motif) is located at residues 33-52 (SLREVAREAGIAPTSFYRHF).

As to quaternary structure, homodimer.

Its subcellular location is the cytoplasm. In terms of biological role, represses the transcription of fabB, involved in unsaturated fatty acid (UFA) biosynthesis. By controlling UFA production, FabR directly influences the physical properties of the membrane bilayer. The protein is HTH-type transcriptional repressor FabR of Klebsiella pneumoniae subsp. pneumoniae (strain ATCC 700721 / MGH 78578).